The chain runs to 441 residues: Platelet-activating factor acetylhydrolase (441 aa).

Residues 1 to 21 form the signal peptide; the sequence is MVPPKLHVLFCLCGCLAVVYP. Serine 273 functions as the Nucleophile in the catalytic mechanism. Catalysis depends on charge relay system residues aspartate 296 and histidine 351. Asparagine 423 and asparagine 433 each carry an N-linked (GlcNAc...) asparagine glycan.

This sequence belongs to the AB hydrolase superfamily. Lipase family. In terms of processing, N-glycosylated. Macrophage-derived PLA2G7 carries sialylated complex-type N-glycans that hinder its binding to HDL particles. Plasma. Secreted by macrophages (at protein level).

The protein resides in the secreted. It is found in the extracellular space. It carries out the reaction a 1-O-alkyl-2-acetyl-sn-glycero-3-phosphocholine + H2O = a 1-O-alkyl-sn-glycero-3-phosphocholine + acetate + H(+). The catalysed reaction is 1-O-decyl-2-acetyl-sn-glycero-3-phosphocholine + H2O = 1-O-decyl-sn-glycero-3-phosphocholine + acetate + H(+). It catalyses the reaction 1-O-dodecyl-2-acetyl-sn-glycero-3-phosphocholine + H2O = 1-O-dodecyl-sn-glycero-3-phosphocholine + acetate + H(+). The enzyme catalyses 1-O-tetradecyl-2-acetyl-sn-glycero-3-phosphocholine + H2O = 1-O-tetradecyl-sn-glycero-3-phosphocholine + acetate + H(+). It carries out the reaction 1-O-hexadecyl-2-acetyl-sn-glycero-3-phosphocholine + H2O = 1-O-hexadecyl-sn-glycero-3-phosphocholine + acetate + H(+). The catalysed reaction is 1-O-octadecyl-2-acetyl-sn-glycero-3-phosphocholine + H2O = 1-O-octadecyl-sn-glycero-3-phosphocholine + acetate + H(+). It catalyses the reaction 1-hexadecanoyl-2-acetyl-sn-glycero-3-phosphocholine + H2O = 1-hexadecanoyl-sn-glycero-3-phosphocholine + acetate + H(+). The enzyme catalyses 1-hexadecanoyl-2-propionyl-sn-glycero-3-phosphocholine + H2O = propanoate + 1-hexadecanoyl-sn-glycero-3-phosphocholine + H(+). It carries out the reaction 1-hexadecanoyl-2-butanoyl-sn-glycero-3-phosphocholine + H2O = butanoate + 1-hexadecanoyl-sn-glycero-3-phosphocholine + H(+). The catalysed reaction is 1-hexadecanoyl-2-pentanoyl-sn-glycero-3-phosphocholine + H2O = pentanoate + 1-hexadecanoyl-sn-glycero-3-phosphocholine + H(+). It catalyses the reaction 1-hexadecanoyl-2-glutaroyl-sn-glycero-3-phosphocholine + H2O = glutarate + 1-hexadecanoyl-sn-glycero-3-phosphocholine + H(+). The enzyme catalyses 1-hexadecanoyl-2-(5-oxopentanoyl)-sn-glycero-3-phosphocholine + H2O = 5-oxopentanoate + 1-hexadecanoyl-sn-glycero-3-phosphocholine + H(+). It carries out the reaction 1-hexadecanoyl-2-(9-oxononanoyl)-sn-glycero-3-phosphocholine + H2O = 9-oxononanoate + 1-hexadecanoyl-sn-glycero-3-phosphocholine + H(+). The catalysed reaction is 1-hexadecanoyl-2-[9-hydroperoxy-(10E-octadecenoyl)]-sn-glycero-3-phosphocholine + H2O = 9-hydroperoxy-10E-octadecenoate + 1-hexadecanoyl-sn-glycero-3-phosphocholine + H(+). It catalyses the reaction 1-hexadecanoyl-2-(10-hydroperoxy-8E-octadecenoyl)-sn-glycero-3-phosphocholine + H2O = 10-hydroperoxy-(8E)-octadecenoate + 1-hexadecanoyl-sn-glycero-3-phosphocholine + H(+). Lipoprotein-associated calcium-independent phospholipase A2 involved in phospholipid catabolism during inflammatory and oxidative stress response. At the lipid-aqueous interface, hydrolyzes the ester bond of fatty acyl group attached at sn-2 position of phospholipids (phospholipase A2 activity). Specifically targets phospholipids with a short-chain fatty acyl group at sn-2 position. Can hydrolyze phospholipids with long fatty acyl chains, only if they carry oxidized functional groups. Hydrolyzes and inactivates platelet-activating factor (PAF, 1-O-alkyl-2-acetyl-sn-glycero-3-phosphocholine), a potent pro-inflammatory signaling lipid that acts through PTAFR on various innate immune cells. Hydrolyzes oxidatively truncated phospholipids carrying an aldehyde group at omega position, preventing their accumulation in low-density lipoprotein (LDL) particles and uncontrolled pro-inflammatory effects. As part of high-density lipoprotein (HDL) particles, can hydrolyze phospholipids having long-chain fatty acyl hydroperoxides at sn-2 position and protect against potential accumulation of these oxylipins in the vascular wall. Catalyzes the release from membrane phospholipids of F2-isoprostanes, lipid biomarkers of cellular oxidative damage. The polypeptide is Platelet-activating factor acetylhydrolase (PLA2G7) (Homo sapiens (Human)).